The chain runs to 203 residues: Ribosome maturation factor RimP (203 aa).

Residues 183–203 are disordered; the sequence is FDDIETEGSAEGTTGSEEENK.

It belongs to the RimP family.

It localises to the cytoplasm. Required for maturation of 30S ribosomal subunits. The sequence is that of Ribosome maturation factor RimP from Ruegeria sp. (strain TM1040) (Silicibacter sp.).